Here is a 739-residue protein sequence, read N- to C-terminus: Oxysterol-binding protein-related protein 9 (739 aa).

Residues 2–99 (ASIMEGPLSK…WIHALEETIL (98 aa)) form the PH domain. 2 disordered regions span residues 220–292 (TQAS…SYSS) and 306–371 (SSTS…ESVE). Positions 249-259 (NLGSRQSPTPI) are enriched in polar residues. Low complexity predominate over residues 260 to 276 (STGSGQSAPSSSLTSPS). 3 stretches are compositionally biased toward polar residues: residues 277–292 (HVNL…SYSS), 306–330 (SSTS…STGA), and 338–352 (TESL…TNEA).

It belongs to the OSBP family.

It carries out the reaction a 1,2-diacyl-sn-glycero-3-phospho-(1D-myo-inositol 4-phosphate)(out) + a 1,2-diacyl-sn-glycero-3-phospho-L-serine(in) = a 1,2-diacyl-sn-glycero-3-phospho-(1D-myo-inositol 4-phosphate)(in) + a 1,2-diacyl-sn-glycero-3-phospho-L-serine(out). In terms of biological role, interacts with OSBPL11 to function as lipid transfer proteins. Together they form a heterodimer that localizes at the ER-trans-Golgi membrane contact sites, and exchanges phosphatidylserine (1,2-diacyl-sn-glycero-3-phospho-L-serine, PS) for phosphatidylinositol-4-phosphate (1,2-diacyl-sn-glycero-3-phospho-(1D-myo-inositol 4-phosphate), PI(4)P) between the two organelles, a step that is critical for sphingomyelin synthesis in the Golgi complex. The protein is Oxysterol-binding protein-related protein 9 (osbpl9) of Xenopus tropicalis (Western clawed frog).